We begin with the raw amino-acid sequence, 284 residues long: Asialoglycoprotein receptor 1 (284 aa).

Over 1 to 39 (MTKDYQDFQHLDNENDHHQLQRGPPPAPRLLQRLCSGFR) the chain is Cytoplasmic. An Endocytosis signal motif is present at residues 5-8 (YQDF). C35 carries S-palmitoyl cysteine lipidation. A helical; Signal-anchor for type II membrane protein transmembrane segment spans residues 40-60 (LFLLSLGLSILLLVVVCVITS). A coiled-coil region spans residues 58–122 (ITSQNSQLRE…EDLREDHSRL (65 aa)). At 61 to 284 (QNSQLREDLR…VCETELGKAN (224 aa)) the chain is on the extracellular side. N-linked (GlcNAc...) asparagine glycosylation is found at N75, N78, and N146. Cystine bridges form between C153–C164, C181–C276, and C254–C268. One can recognise a C-type lectin domain in the interval 160-277 (YEGSCYWFSS…CRRPYRWVCE (118 aa)). Ca(2+) contacts are provided by V190, E196, D215, Q239, D241, D242, E252, D253, N264, D265, and E277.

As to quaternary structure, interacts with LASS2. In terms of processing, phosphorylated on a cytoplasmic Ser residue. Expressed exclusively in hepatic parenchymal cells.

It localises to the membrane. Functionally, mediates the endocytosis of plasma glycoproteins to which the terminal sialic acid residue on their complex carbohydrate moieties has been removed. The receptor recognizes terminal galactose and N-acetylgalactosamine units. After ligand binding to the receptor, the resulting complex is internalized and transported to a sorting organelle, where receptor and ligand are disassociated. The receptor then returns to the cell membrane surface. In Rattus norvegicus (Rat), this protein is Asialoglycoprotein receptor 1 (Asgr1).